A 255-amino-acid polypeptide reads, in one-letter code: MNTLTVKDIKDRLQEVKDAQDPFIAQCENDPRKSVQTLVEQWLKKQAKEKALKEQWVNMTSYERLARNKGFRLIAGVDEVGRGPLAGPVVASAVILPEECEILGLTDSKKLSEKKREEYYELIMKEALAVGIGIVEATVIDEINIYEASKMAMVKAIQDLSDTPDYLLVDAMTLPLDTAQASIIKGDAKSVSIAAGACIAKVTRDRMMSAYAETYPMYGFEKNKGYGTKEHLEALAAYGPTELHRKTFAPVQSFR.

In terms of domain architecture, RNase H type-2 spans 72–255 (RLIAGVDEVG…KTFAPVQSFR (184 aa)). Residues Asp78, Glu79, and Asp170 each contribute to the a divalent metal cation site.

The protein belongs to the RNase HII family. Mn(2+) serves as cofactor. It depends on Mg(2+) as a cofactor.

It localises to the cytoplasm. The enzyme catalyses Endonucleolytic cleavage to 5'-phosphomonoester.. Its function is as follows. Endonuclease that specifically degrades the RNA of RNA-DNA hybrids. This chain is Ribonuclease HII (rnhB), found in Bacillus subtilis (strain 168).